The primary structure comprises 358 residues: Insulin gene enhancer protein ISL-2A (358 aa).

LIM zinc-binding domains follow at residues 27 to 80 (CVGC…CKRD) and 89 to 143 (CANC…RADH). The homeobox DNA-binding region spans 190–249 (TTRVRTVLNEKQLHTLRTCYNANPRPDALMKEQLVEMTGLSPRVIRVWFQNKRCKDKKRS). The segment covering 325 to 335 (ESGSMGNSSGS) has biased composition (low complexity). Residues 325-358 (ESGSMGNSSGSDVTSLSSQLPDTPNSMVASPVDT) form a disordered region. The span at 336–358 (DVTSLSSQLPDTPNSMVASPVDT) shows a compositional bias: polar residues.

It is found in the nucleus. In terms of biological role, binds to one of the cis-acting domain of the insulin gene enhancer. May be involved in subtype specialization of primary motoneurons. This is Insulin gene enhancer protein ISL-2A (isl2a) from Oncorhynchus tshawytscha (Chinook salmon).